The following is a 144-amino-acid chain: MQLNDLRSAPGARREKLRPGRGIGSGLGKTGGRGHKGQTSRSGGKIAPGFEGGQQPLHRRLPKFGFTSLKALDRAEIRTSELAKVEGDVVTLQALKDANLVNQGVRRVKVMLSGDVGRAVTLKGIAVTKGARAAIEAAGGKIED.

Positions 1 to 58 (MQLNDLRSAPGARREKLRPGRGIGSGLGKTGGRGHKGQTSRSGGKIAPGFEGGQQPLH) are disordered. A compositionally biased stretch (gly residues) spans 21–31 (RGIGSGLGKTG).

Belongs to the universal ribosomal protein uL15 family. Part of the 50S ribosomal subunit.

Functionally, binds to the 23S rRNA. In Azotobacter vinelandii (strain DJ / ATCC BAA-1303), this protein is Large ribosomal subunit protein uL15.